Here is a 275-residue protein sequence, read N- to C-terminus: Phosphonates import ATP-binding protein PhnC (275 aa).

In terms of domain architecture, ABC transporter spans 2–246; that stretch reads LKIENLTKRY…ALTEIYGEEE (245 aa). Position 35-42 (35-42) interacts with ATP; it reads GPSGAGKS.

It belongs to the ABC transporter superfamily. Phosphonates importer (TC 3.A.1.9.1) family. As to quaternary structure, the complex is composed of two ATP-binding proteins (PhnC), two transmembrane proteins (PhnE) and a solute-binding protein (PhnD).

The protein localises to the cell inner membrane. The enzyme catalyses phosphonate(out) + ATP + H2O = phosphonate(in) + ADP + phosphate + H(+). Its function is as follows. Part of the ABC transporter complex PhnCDE involved in phosphonates import. Responsible for energy coupling to the transport system. The chain is Phosphonates import ATP-binding protein PhnC from Wolinella succinogenes (strain ATCC 29543 / DSM 1740 / CCUG 13145 / JCM 31913 / LMG 7466 / NCTC 11488 / FDC 602W) (Vibrio succinogenes).